A 101-amino-acid polypeptide reads, in one-letter code: Replication restart protein PriB (101 aa).

The region spanning 1 to 101 is the SSB domain; sequence MATNHLVLSG…LHAENVELKT (101 aa).

This sequence belongs to the PriB family. As to quaternary structure, homodimer. Interacts with PriA and DnaT. Component of the replication restart primosome. Primosome assembly occurs via a 'hand-off' mechanism. PriA binds to replication forks, subsequently PriB then DnaT bind; DnaT then displaces ssDNA to generate the helicase loading substrate.

In terms of biological role, involved in the restart of stalled replication forks, which reloads the replicative helicase on sites other than the origin of replication; the PriA-PriB pathway is the major replication restart pathway. During primosome assembly it facilitates complex formation between PriA and DnaT on DNA; stabilizes PriA on DNA. Stimulates the DNA unwinding activity of PriA helicase. This is Replication restart protein PriB from Shewanella sediminis (strain HAW-EB3).